Consider the following 547-residue polypeptide: MAAKEIIFSEKARSRMVHGVNLLANAVKATLGPKGRHVVLDKSFGSPIITKDGVSVAKEIELADKFENMGAQMLKEVASKTNDHAGDGTTTATVLAQALIREGCKAVAAGMNPMDLKRGIDKAVIAAVTELKKISKPTSDDKAIAQVATISANSDESIGNIIAEAMKKVGKEGVITIEEGTTLENELDVVEGMQFDRGYSSPYFINNQQSQIVELDNPYILLHDKKISSVRDLLTVLDAVAKESKPLLIVAEEVEGEALATLVVNNIRGIIKVCAVKAPGFGDRRKAMLEDMAVLTGGTVISEEVGLSLEKATTSHLGKAKKVRVSKENTTIIDGIGDNDAINGRVKQIKTQIEETTSDYDREKLQERVAKLAGGVAVIKVGAATEVEMKEKKARVDDALLATRAAVEEGVIPGGGVALIRAITAISNLKGANEDQTHGIQIALRAMEAPLREIVANAGEEPSVILNKVKEGKDNFGYNAATGEFGDMVNLGILDPTKVTRSALQNAASIAGLMITTEAMVAEAPKKDEPTPPAAGGGMGGMGGMDF.

ATP-binding positions include 30 to 33 (TLGP), Lys51, 87 to 91 (DGTTT), Gly415, 479 to 481 (NAA), and Asp495. Positions 524–547 (APKKDEPTPPAAGGGMGGMGGMDF) are disordered. Gly residues predominate over residues 535-547 (AGGGMGGMGGMDF).

This sequence belongs to the chaperonin (HSP60) family. In terms of assembly, forms a cylinder of 14 subunits composed of two heptameric rings stacked back-to-back. Interacts with the co-chaperonin GroES.

The protein resides in the cytoplasm. The enzyme catalyses ATP + H2O + a folded polypeptide = ADP + phosphate + an unfolded polypeptide.. Functionally, together with its co-chaperonin GroES, plays an essential role in assisting protein folding. The GroEL-GroES system forms a nano-cage that allows encapsulation of the non-native substrate proteins and provides a physical environment optimized to promote and accelerate protein folding. In Xylella fastidiosa (strain 9a5c), this protein is Chaperonin GroEL.